Here is a 245-residue protein sequence, read N- to C-terminus: Uridylate kinase (245 aa).

Position 15 to 18 (15 to 18 (KLSG)) interacts with ATP. Residues 23–28 (GEEGFG) form an involved in allosteric activation by GTP region. UMP is bound at residue Gly-57. Gly-58 and Arg-62 together coordinate ATP. Residues Asp-77 and 138 to 145 (TGNPFCTT) each bind UMP. ATP contacts are provided by Thr-165, Tyr-171, and Asp-174.

It belongs to the UMP kinase family. Homohexamer.

Its subcellular location is the cytoplasm. The enzyme catalyses UMP + ATP = UDP + ADP. Its pathway is pyrimidine metabolism; CTP biosynthesis via de novo pathway; UDP from UMP (UMPK route): step 1/1. Its activity is regulated as follows. Allosterically activated by GTP. Inhibited by UTP. In terms of biological role, catalyzes the reversible phosphorylation of UMP to UDP. This Shewanella putrefaciens (strain CN-32 / ATCC BAA-453) protein is Uridylate kinase.